Here is a 138-residue protein sequence, read N- to C-terminus: NADH-quinone oxidoreductase subunit A (138 aa).

The next 3 helical transmembrane spans lie at 8–28 (FGAV…GYLT), 63–83 (FYVV…LFPW), and 93–113 (FALI…AYAW).

Belongs to the complex I subunit 3 family. As to quaternary structure, NDH-1 is composed of 14 different subunits. Subunits NuoA, H, J, K, L, M, N constitute the membrane sector of the complex.

It is found in the cell inner membrane. It carries out the reaction a quinone + NADH + 5 H(+)(in) = a quinol + NAD(+) + 4 H(+)(out). Functionally, NDH-1 shuttles electrons from NADH, via FMN and iron-sulfur (Fe-S) centers, to quinones in the respiratory chain. The immediate electron acceptor for the enzyme in this species is believed to be a menaquinone. Couples the redox reaction to proton translocation (for every two electrons transferred, four hydrogen ions are translocated across the cytoplasmic membrane), and thus conserves the redox energy in a proton gradient. The sequence is that of NADH-quinone oxidoreductase subunit A from Prosthecochloris aestuarii (strain DSM 271 / SK 413).